The sequence spans 156 residues: Putative HTH-type transcriptional regulator YffB (156 aa).

The 136-residue stretch at 2 to 137 (KLSSGWEQSV…SNVSLAQVAD (136 aa)) folds into the HTH rrf2-type domain.

This Lactococcus lactis subsp. lactis (strain IL1403) (Streptococcus lactis) protein is Putative HTH-type transcriptional regulator YffB (yffB).